The chain runs to 182 residues: Mesencephalic astrocyte-derived neurotrophic factor (182 aa).

The N-terminal stretch at 1 to 24 (MRRMWATQGLAVALALSVLPGSRA) is a signal peptide. 4 disulfides stabilise this stretch: Cys-30–Cys-117, Cys-33–Cys-106, Cys-64–Cys-75, and Cys-151–Cys-154. The residue at position 76 (Tyr-76) is a Phosphotyrosine. Residues 96–158 (LAHHIPVEKI…ETCKGCAEKS (63 aa)) form an interacts with ERN1, EIF2AK3 and ATF6 region. The interval 129–172 (TVDLKKLRVKELKKILDDWGETCKGCAEKSDYIRKINELMPKYA) is interacts with HSPA5.

It belongs to the ARMET family. In terms of assembly, interacts directly (via SAP domain) with HSPA5/BiP; the interaction inhibits ATP binding to HSPA5/BiP and subsequent nucleotide exchange. Component of a complex containing at least CRELD2, MANF, MATN3 and PDIA4. Interacts (via C-terminus) with ERN1 (via luminal domain); the interaction is decreased in the presence of increasing concentrations of Ca(2+). May contain sialic acid residues.

It localises to the secreted. The protein localises to the endoplasmic reticulum lumen. Its subcellular location is the sarcoplasmic reticulum lumen. Functionally, selectively promotes the survival of dopaminergic neurons of the ventral mid-brain. Modulates GABAergic transmission to the dopaminergic neurons of the substantia nigra. Enhances spontaneous, as well as evoked, GABAergic inhibitory postsynaptic currents in dopaminergic neurons. Inhibits cell proliferation and endoplasmic reticulum (ER) stress-induced cell death. Retained in the ER/sarcoplasmic reticulum (SR) through association with the endoplasmic reticulum chaperone protein HSPA5 under normal conditions. Stabilizes HSPA5/BiP in its substrate-bound ADP state, which facilitates HSPA5/BiP incorporation into chaperone-client complexes during endoplasmic reticulum stress, its interaction with HSPA5/BiP inhibits ATP binding to HSPA5/BiP and subsequent nucleotide exchange. As a result acts as a repressor of the unfolded protein response (UPR) pathway. Up-regulated and secreted by the ER/SR in response to ER stress and hypoxia. Following secretion by the ER/SR, directly binds to 3-O-sulfogalactosylceramide, a lipid sulfatide in the outer cell membrane of target cells. Sulfatide binding promotes its cellular uptake by endocytosis, and is required for its role in alleviating ER stress and cell toxicity under hypoxic and ER stress conditions. Essential for embryonic lung development. Required for the correct postnatal temporal and structural development of splenic white pulp. Required for the repair-associated myeloid response in skeletal muscle, acts as a regulator of phenotypic transition towards prorepair macrophages in response to muscle injury and as a result limits excessive proinflammatory signaling. Represses RELA expression and therefore NF-kB signaling in the myocardium, as a result limits macrophage infiltration of injured tissue and M1 macrophage differentiation in response to myocardial injury. Required for endochondral ossification in long bones and the skull during postnatal development. The protein is Mesencephalic astrocyte-derived neurotrophic factor of Homo sapiens (Human).